The chain runs to 276 residues: ATP synthase subunit delta (276 aa).

The protein belongs to the ATPase delta chain family. In terms of assembly, F-type ATPases have 2 components, F(1) - the catalytic core - and F(0) - the membrane proton channel. F(1) has five subunits: alpha(3), beta(3), gamma(1), delta(1), epsilon(1). F(0) has three main subunits: a(1), b(2) and c(10-14). The alpha and beta chains form an alternating ring which encloses part of the gamma chain. F(1) is attached to F(0) by a central stalk formed by the gamma and epsilon chains, while a peripheral stalk is formed by the delta and b chains.

The protein localises to the cell membrane. Its function is as follows. F(1)F(0) ATP synthase produces ATP from ADP in the presence of a proton or sodium gradient. F-type ATPases consist of two structural domains, F(1) containing the extramembraneous catalytic core and F(0) containing the membrane proton channel, linked together by a central stalk and a peripheral stalk. During catalysis, ATP synthesis in the catalytic domain of F(1) is coupled via a rotary mechanism of the central stalk subunits to proton translocation. In terms of biological role, this protein is part of the stalk that links CF(0) to CF(1). It either transmits conformational changes from CF(0) to CF(1) or is implicated in proton conduction. The sequence is that of ATP synthase subunit delta from Kineococcus radiotolerans (strain ATCC BAA-149 / DSM 14245 / SRS30216).